The primary structure comprises 411 residues: Creatinase (411 aa).

Histidine 240 is an active-site residue.

Belongs to the peptidase M24 family. Creatinase subfamily. Homodimer.

The catalysed reaction is creatine + H2O = sarcosine + urea. This Bacillus sp. (strain B-0618) protein is Creatinase.